A 47-amino-acid polypeptide reads, in one-letter code: Lysis protein for colicins E2 and E3 (47 aa).

The signal sequence occupies residues 1–19; that stretch reads MKKITGIILLLLAVIILSA. C20 is lipidated: N-palmitoyl cysteine. C20 carries S-diacylglycerol cysteine lipidation.

It localises to the cell outer membrane. Its function is as follows. Lysis proteins are required for both colicin release and partial cell lysis. This Escherichia coli protein is Lysis protein for colicins E2 and E3 (hic).